A 131-amino-acid chain; its full sequence is D-ribose pyranase (131 aa).

The active-site Proton donor is His20. Substrate is bound by residues Asp28, His98, and 120–122; that span reads YAN.

Belongs to the RbsD / FucU family. RbsD subfamily. In terms of assembly, homodecamer.

It is found in the cytoplasm. The catalysed reaction is beta-D-ribopyranose = beta-D-ribofuranose. Its pathway is carbohydrate metabolism; D-ribose degradation; D-ribose 5-phosphate from beta-D-ribopyranose: step 1/2. In terms of biological role, catalyzes the interconversion of beta-pyran and beta-furan forms of D-ribose. The chain is D-ribose pyranase from Bacillus velezensis (strain DSM 23117 / BGSC 10A6 / LMG 26770 / FZB42) (Bacillus amyloliquefaciens subsp. plantarum).